A 204-amino-acid chain; its full sequence is Methylthioribulose-1-phosphate dehydratase (204 aa).

Residues H94 and H96 each coordinate Zn(2+).

The protein belongs to the aldolase class II family. MtnB subfamily. Zn(2+) serves as cofactor.

It catalyses the reaction 5-(methylsulfanyl)-D-ribulose 1-phosphate = 5-methylsulfanyl-2,3-dioxopentyl phosphate + H2O. It functions in the pathway amino-acid biosynthesis; L-methionine biosynthesis via salvage pathway; L-methionine from S-methyl-5-thio-alpha-D-ribose 1-phosphate: step 2/6. In terms of biological role, catalyzes the dehydration of methylthioribulose-1-phosphate (MTRu-1-P) into 2,3-diketo-5-methylthiopentyl-1-phosphate (DK-MTP-1-P). The sequence is that of Methylthioribulose-1-phosphate dehydratase from Pseudomonas savastanoi pv. phaseolicola (strain 1448A / Race 6) (Pseudomonas syringae pv. phaseolicola (strain 1448A / Race 6)).